The sequence spans 944 residues: Spindle pole body component 110 (944 aa).

Thr-18 bears the Phosphothreonine mark. A disordered region spans residues 23-110; it reads IKSKRNTTQT…RKRNLIDDLK (88 aa). Positions 28–46 are enriched in polar residues; sequence NTTQTQVVSPTKVPNANNG. A Nuclear localization signal motif is present at residues 54–59; that stretch reads KKRQRR. Phosphoserine; by MPS1 is present on Ser-60. 2 positions are modified to phosphothreonine; by MPS1: Thr-64 and Thr-68. A compositionally biased stretch (polar residues) spans 67-78; it reads STRLFSEASQFD. Ser-80 bears the Phosphoserine mark. Residues 96–110 show a composition bias toward basic and acidic residues; that stretch reads NVDKSRKRNLIDDLK. A coiled-coil region spans residues 119 to 799; the sequence is LKEQEVREHQ…ILNERRKDND (681 aa). Ser-529 is modified (phosphoserine). 2 consecutive short sequence motifs (nuclear localization signal) follow at residues 726–731 and 742–747; these read KEKYKR and RLRREK. A calmodulin-binding region spans residues 900–927; sequence SFKTVALLVLACVRMKRIAFYRRSDDNR.

Belongs to the SPC110 family. Homodimer. Component of the SPC110 complex containing at least CMD1, SPC29 and SCP110. Interacts with SPC97 and SPC98.

The protein localises to the nucleus. It localises to the cytoplasm. Its subcellular location is the cytoskeleton. It is found in the microtubule organizing center. The protein resides in the spindle pole body. Component of the spindle pole body (SPB) required for the proper execution of spindle pole body (SPB) duplication. Potential role in cross-linking filaments or anchoring other molecules. It is essential for growth. This chain is Spindle pole body component 110 (SPC110), found in Saccharomyces cerevisiae (strain YJM789) (Baker's yeast).